Consider the following 176-residue polypeptide: Lipoprotein signal peptidase (176 aa).

The next 4 membrane-spanning stretches (helical) occupy residues 11 to 31 (AFVA…LDQL), 38 to 58 (ATMQ…VLVF), 76 to 96 (WFFT…MHQH), and 101 to 121 (LLPA…VDRL). Active-site residues include D128 and D146. The helical transmembrane segment at 139 to 159 (WPAFNLADSAITLGVGLMLWA) threads the bilayer.

The protein belongs to the peptidase A8 family.

Its subcellular location is the cell inner membrane. It catalyses the reaction Release of signal peptides from bacterial membrane prolipoproteins. Hydrolyzes -Xaa-Yaa-Zaa-|-(S,diacylglyceryl)Cys-, in which Xaa is hydrophobic (preferably Leu), and Yaa (Ala or Ser) and Zaa (Gly or Ala) have small, neutral side chains.. Its pathway is protein modification; lipoprotein biosynthesis (signal peptide cleavage). Functionally, this protein specifically catalyzes the removal of signal peptides from prolipoproteins. This chain is Lipoprotein signal peptidase, found in Azoarcus sp. (strain BH72).